A 133-amino-acid polypeptide reads, in one-letter code: Putative N-acetylgalactosamine permease IIC component 2 (133 aa).

The Cytoplasmic portion of the chain corresponds to 1–2; the sequence is ME. Residues 1 to 133 form the PTS EIIC type-4 domain; that stretch reads MEISLLQAFA…CDLATNPRRI (133 aa). The helical transmembrane segment at 3-23 threads the bilayer; it reads ISLLQAFALGIIAFIAGLDMF. Over 24-32 the chain is Periplasmic; sequence NGLTHMHRP. The helical transmembrane segment at 33-53 threads the bilayer; sequence VVLGPLVGLVLGDLHTGILTG. Residues 54 to 65 are Cytoplasmic-facing; the sequence is GTLELVWMGLAP. The helical transmembrane segment at 66–86 threads the bilayer; the sequence is LAGAQPPNVIIGTIVGTAFAI. Residues 87-93 are Periplasmic-facing; the sequence is TTGVKPD. A helical membrane pass occupies residues 94 to 114; sequence VAVGVAVPFAVAVQMGITFLF. Over 115-133 the chain is Cytoplasmic; it reads SVMSGVMSRCDLATNPRRI.

The protein resides in the cell inner membrane. Functionally, the phosphoenolpyruvate-dependent sugar phosphotransferase system (PTS), a major carbohydrate active -transport system, catalyzes the phosphorylation of incoming sugar substrates concomitant with their translocation across the cell membrane. This system is involved in N-acetylgalactosamine transport. This Escherichia coli (strain K12) protein is Putative N-acetylgalactosamine permease IIC component 2 (agaW).